We begin with the raw amino-acid sequence, 347 residues long: GMP reductase (347 aa).

108–131 contributes to the NADP(+) binding site; it reads TDFEKTKQILIANPALNFLCIDVA. Residues Gly181 and Gly183 each contribute to the K(+) site. Cys186 acts as the Thioimidate intermediate in catalysis. 216–239 contacts NADP(+); the sequence is IISDGGCTMPGDVAKAFGGGADFV.

It belongs to the IMPDH/GMPR family. GuaC type 1 subfamily. As to quaternary structure, homotetramer.

The enzyme catalyses IMP + NH4(+) + NADP(+) = GMP + NADPH + 2 H(+). Functionally, catalyzes the irreversible NADPH-dependent deamination of GMP to IMP. It functions in the conversion of nucleobase, nucleoside and nucleotide derivatives of G to A nucleotides, and in maintaining the intracellular balance of A and G nucleotides. This is GMP reductase from Enterobacter sp. (strain 638).